A 399-amino-acid chain; its full sequence is Zinc metalloproteinase nas-25 (399 aa).

The first 20 residues, 1–20, serve as a signal peptide directing secretion; sequence MQIYLGITICLVAFLTVIDC. The 197-residue stretch at 41-237 folds into the Peptidase M12A domain; sequence QVQRDLTYRW…DQINQYYQCY (197 aa). N-linked (GlcNAc...) asparagine glycosylation is found at N52 and N61. Cystine bridges form between C82–C236, C106–C126, C240–C260, and C265–C274. Residue H134 participates in Zn(2+) binding. E135 is an active-site residue. Zn(2+) is bound by residues H138 and H144. The region spanning 232–275 is the EGF-like domain; it reads QYYQCYDSCRNAGQLANCANGGIPNPNNCQVCNCPMGYGGDLCD. The N-linked (GlcNAc...) asparagine glycan is linked to N371.

Requires Zn(2+) as cofactor. Expressed in pharyngeal muscles, pharyngeal-intestinal valve, rectal gland cells and arcade cells.

Its subcellular location is the secreted. Metalloprotease. The chain is Zinc metalloproteinase nas-25 (nas-25) from Caenorhabditis elegans.